Consider the following 65-residue polypeptide: uncharacterized protein (65 aa).

The next 2 membrane-spanning stretches (helical) occupy residues 4 to 24 (TIWL…MLYP) and 45 to 65 (FGGG…KTIG).

It localises to the cell membrane. This is an uncharacterized protein from Escherichia coli O157:H7.